Reading from the N-terminus, the 153-residue chain is Interleukin-4 (153 aa).

The signal sequence occupies residues 1 to 24 (MGLTSQLLPPLFFLLACAGNFAHG). Cystine bridges form between C27/C151, C48/C89, and C70/C123. A glycan (N-linked (GlcNAc...) asparagine) is linked at N62.

It belongs to the IL-4/IL-13 family.

The protein localises to the secreted. Functionally, participates in at least several B-cell activation processes as well as of other cell types. It is a costimulator of DNA-synthesis. It induces the expression of class II MHC molecules on resting B-cells. It enhances both secretion and cell surface expression of IgE and IgG1. It also regulates the expression of the low affinity Fc receptor for IgE (CD23) on both lymphocytes and monocytes. Positively regulates IL31RA expression in macrophages. Stimulates autophagy in dendritic cells by interfering with mTORC1 signaling and through the induction of RUFY4. The polypeptide is Interleukin-4 (IL4) (Cercocebus atys (Sooty mangabey)).